A 212-amino-acid chain; its full sequence is uncharacterized protein (212 aa).

S-adenosyl-L-methionine-binding residues include G53, E74, and D97.

It belongs to the methyltransferase superfamily. YrrT family.

In terms of biological role, could be a S-adenosyl-L-methionine-dependent methyltransferase. This is an uncharacterized protein from Bacillus cytotoxicus (strain DSM 22905 / CIP 110041 / 391-98 / NVH 391-98).